Reading from the N-terminus, the 57-residue chain is Protein translocase subunit SecE (57 aa).

The chain crosses the membrane as a helical span at residues 33 to 53 (GAGIFLVGLLGFIIFAVMSFL).

The protein belongs to the SecE/SEC61-gamma family. Component of the Sec protein translocase complex. Heterotrimer consisting of SecY (alpha), SecG (beta) and SecE (gamma) subunits. The heterotrimers can form oligomers, although 1 heterotrimer is thought to be able to translocate proteins. Interacts with the ribosome. May interact with SecDF, and other proteins may be involved.

The protein resides in the cell membrane. Functionally, essential subunit of the Sec protein translocation channel SecYEG. Clamps together the 2 halves of SecY. May contact the channel plug during translocation. This chain is Protein translocase subunit SecE, found in Haloferax mediterranei (strain ATCC 33500 / DSM 1411 / JCM 8866 / NBRC 14739 / NCIMB 2177 / R-4) (Halobacterium mediterranei).